The primary structure comprises 339 residues: Beta-ketoacyl-[acyl-carrier-protein] synthase III (339 aa).

Residues Cys-119 and His-262 contribute to the active site. The tract at residues 263–267 (QANQR) is ACP-binding. Asn-292 is an active-site residue.

Belongs to the thiolase-like superfamily. FabH family. In terms of assembly, homodimer.

The protein resides in the cytoplasm. It catalyses the reaction malonyl-[ACP] + acetyl-CoA + H(+) = 3-oxobutanoyl-[ACP] + CO2 + CoA. It functions in the pathway lipid metabolism; fatty acid biosynthesis. Catalyzes the condensation reaction of fatty acid synthesis by the addition to an acyl acceptor of two carbons from malonyl-ACP. Catalyzes the first condensation reaction which initiates fatty acid synthesis and may therefore play a role in governing the total rate of fatty acid production. Possesses both acetoacetyl-ACP synthase and acetyl transacylase activities. Its substrate specificity determines the biosynthesis of branched-chain and/or straight-chain of fatty acids. This chain is Beta-ketoacyl-[acyl-carrier-protein] synthase III, found in Prochlorococcus marinus (strain MIT 9313).